Here is a 133-residue protein sequence, read N- to C-terminus: Small ribosomal subunit protein uS8c (133 aa).

Disordered regions lie at residues 1 to 23 (MGND…GAET) and 44 to 133 (FSGN…HVWR). 2 stretches are compositionally biased toward polar residues: residues 12-23 (APRNASSRGAET) and 55-66 (TNRFPVSTSKYQ). The segment covering 67-81 (GRTRKARITTRRRVS) has biased composition (basic residues). A compositionally biased stretch (basic and acidic residues) spans 114–133 (TDREARQKRIGGEAPRHVWR).

It belongs to the universal ribosomal protein uS8 family. As to quaternary structure, part of the 30S ribosomal subunit.

The protein localises to the plastid. It is found in the chloroplast. In terms of biological role, one of the primary rRNA binding proteins, it binds directly to 16S rRNA central domain where it helps coordinate assembly of the platform of the 30S subunit. In Selaginella uncinata (Blue spike-moss), this protein is Small ribosomal subunit protein uS8c (rps8).